Here is a 433-residue protein sequence, read N- to C-terminus: B3 domain-containing protein Os04g0676600 (433 aa).

Disordered regions lie at residues 1 to 29 and 216 to 283; these read MADT…GGGQ and FPPV…NSAN. Basic and acidic residues predominate over residues 13 to 24; it reads GDDRGREGHDDF. The span at 216–229 shows a compositional bias: low complexity; it reads FPPVSSSSRSFSSA. Positions 237-265 are enriched in basic and acidic residues; sequence DAKKAKKSDIKDQPIVLRRSDTESEKNDE. Polar residues predominate over residues 269 to 283; sequence TPASEPSSMSHNSAN. A DNA-binding region (TF-B3) is located at residues 297-399; the sequence is LRKELTNSDV…KLVVRGEKAI (103 aa).

It localises to the nucleus. Its function is as follows. Probable transcription regulator that binds specifically to the DNA sequence 5'-CATGC-3' of the IDE1 element found in the promoter of the barley iron deficiency-inducible gene IDS2. In Oryza sativa subsp. japonica (Rice), this protein is B3 domain-containing protein Os04g0676600.